Reading from the N-terminus, the 159-residue chain is Succinate dehydrogenase [ubiquinone] cytochrome b small subunit, mitochondrial (159 aa).

A mitochondrion-targeting transit peptide spans 1–56 (MAVLWRLSAVCGAQGGRALLLRTPVVRPAHISAFLQDRPIPEWCGVQHIHLSPGHH). At 57–63 (SGSKAAS) the chain is on the mitochondrial matrix side. Residues 64 to 85 (LHWTSERVVSVLLLGLLPAAYL) form a helical membrane-spanning segment. The Mitochondrial intermembrane portion of the chain corresponds to 86–90 (NPCSA). Residues 91-111 (MDYSLAATLTLHGHWGLGQVV) traverse the membrane as a helical segment. H102 contributes to the heme b binding site. Over 112–120 (TDYVHGDAS) the chain is Mitochondrial matrix. An a ubiquinone-binding site is contributed by Y114. A helical transmembrane segment spans residues 121 to 142 (QKAAKAGLLALSALTFAGLCYF). Residues 143 to 159 (NYHDVGICKAVAMLWKL) lie on the Mitochondrial intermembrane side of the membrane.

It belongs to the CybS family. In terms of assembly, component of complex II composed of four subunits: the flavoprotein (FP) SDHA, iron-sulfur protein (IP) SDHB, and a cytochrome b560 composed of SDHC and SDHD.

It localises to the mitochondrion inner membrane. Its pathway is carbohydrate metabolism; tricarboxylic acid cycle. In terms of biological role, membrane-anchoring subunit of succinate dehydrogenase (SDH) that is involved in complex II of the mitochondrial electron transport chain and is responsible for transferring electrons from succinate to ubiquinone (coenzyme Q). SDH also oxidizes malate to the non-canonical enol form of oxaloacetate, enol-oxaloacetate. Enol-oxaloacetate, which is a potent inhibitor of the succinate dehydrogenase activity, is further isomerized into keto-oxaloacetate. The sequence is that of Succinate dehydrogenase [ubiquinone] cytochrome b small subunit, mitochondrial (SDHD) from Pongo abelii (Sumatran orangutan).